Here is a 123-residue protein sequence, read N- to C-terminus: uncharacterized protein (123 aa).

Positions 1–24 (MLPLCLTFLSFFLSLGGSFKAVMT) are cleaved as a signal peptide. 2 helical membrane-spanning segments follow: residues 39-59 (FWIF…ALAI) and 101-121 (FGGI…ALTG).

The protein resides in the membrane. This is an uncharacterized protein from Saccharomyces cerevisiae (strain ATCC 204508 / S288c) (Baker's yeast).